Reading from the N-terminus, the 179-residue chain is Large ribosomal subunit protein uL6 (179 aa).

It belongs to the universal ribosomal protein uL6 family. As to quaternary structure, part of the 50S ribosomal subunit.

This protein binds to the 23S rRNA, and is important in its secondary structure. It is located near the subunit interface in the base of the L7/L12 stalk, and near the tRNA binding site of the peptidyltransferase center. The polypeptide is Large ribosomal subunit protein uL6 (Gemmatimonas aurantiaca (strain DSM 14586 / JCM 11422 / NBRC 100505 / T-27)).